The following is a 756-amino-acid chain: Cilium assembly protein DZIP1L (756 aa).

The disordered stretch occupies residues 1–20 (MLGQFSPGEPYTTSLSSTPP). A compositionally biased stretch (low complexity) spans 10 to 19 (PYTTSLSSTP). Residues 108-158 (DFLSSQLAGLEERLQAATSLVQQGEGQRAELEKSLQETKQENRRRKQLIAT) adopt a coiled-coil conformation. A C2H2-type zinc finger spans residues 171–194 (HKCQFCEKSFVNYSYLQAHVQRRH). Basic and acidic residues-rich tracts occupy residues 193–202 (RHPEVTDAEK), 237–262 (NLRR…ERWK), 319–335 (DPEK…LRER), and 344–365 (RRKF…KSEN). 6 disordered regions span residues 193 to 212 (RHPE…EEME), 233 to 262 (QQAD…ERWK), 310 to 365 (NNAS…KSEN), 409 to 466 (KIKK…MRES), 531 to 626 (VKSL…AYIT), and 693 to 756 (IKTP…GTSA). Coiled coils occupy residues 196-283 (EVTD…FLQE) and 321-416 (EKEM…LSAT). Over residues 534–558 (LQKSSGKPTPNTLKQRGKKTSTPLN) the composition is skewed to polar residues. Over residues 560-578 (KSLRFRQDSKASDRREKSQ) the composition is skewed to basic and acidic residues. Residues 586-598 (TPTPRSKAPPPNQ) are compositionally biased toward pro residues.

The protein belongs to the DZIP C2H2-type zinc-finger protein family.

It is found in the cytoplasm. It localises to the cytoskeleton. Its subcellular location is the cilium basal body. The protein localises to the microtubule organizing center. The protein resides in the centrosome. It is found in the centriole. Involved in primary cilium formation. Probably acts as a transition zone protein required for localization of PKD1/PC1 and PKD2/PC2 to the ciliary membrane. This Danio rerio (Zebrafish) protein is Cilium assembly protein DZIP1L (dzip1l).